Consider the following 171-residue polypeptide: S-ribosylhomocysteine lyase (171 aa).

Positions 54, 58, and 128 each coordinate Fe cation.

Belongs to the LuxS family. As to quaternary structure, homodimer. The cofactor is Fe cation.

The catalysed reaction is S-(5-deoxy-D-ribos-5-yl)-L-homocysteine = (S)-4,5-dihydroxypentane-2,3-dione + L-homocysteine. Its function is as follows. Involved in the synthesis of autoinducer 2 (AI-2) which is secreted by bacteria and is used to communicate both the cell density and the metabolic potential of the environment. The regulation of gene expression in response to changes in cell density is called quorum sensing. Catalyzes the transformation of S-ribosylhomocysteine (RHC) to homocysteine (HC) and 4,5-dihydroxy-2,3-pentadione (DPD). In Salmonella typhi, this protein is S-ribosylhomocysteine lyase.